We begin with the raw amino-acid sequence, 651 residues long: Transcription factor E2-alpha (651 aa).

Disordered regions lie at residues 32-107 (ANGK…SERN), 131-208 (LSLS…KTPS), and 341-378 (DHSS…ALSP). Composition is skewed to low complexity over residues 56–73 (SSGS…FDPS), 131–148 (LSLS…KSSS), and 341–354 (DHSS…PSTP). A phosphoserine mark is found at Ser-135 and Ser-140. Thr-353 carries the phosphothreonine modification. The residue at position 357 (Ser-357) is a Phosphoserine. Arg-369 bears the Omega-N-methylarginine mark. The residue at position 377 (Ser-377) is a Phosphoserine. Residues 387–422 (LSKMEDRLDEAIHVLRSHAVGTASDLHGLLPGHGAL) are leucine-zipper. Residues 457–549 (HNHASLPSQP…KAEREKERRV (93 aa)) form a disordered region. Residues 461 to 479 (SLPSQPSSLPDLSQRPPDS) are compositionally biased toward low complexity. A Glycyl lysine isopeptide (Lys-Gly) (interchain with G-Cter in SUMO2) cross-link involves residue Lys-496. Ser-526 carries the post-translational modification Phosphoserine. The residue at position 528 (Asp-528) is a Phosphothreonine. Asp-533 carries the phosphoserine modification. The span at 539-549 (QKAEREKERRV) shows a compositional bias: basic and acidic residues. The 54-residue stretch at 546–599 (ERRVANNARERLRVRDINEAFKELGRMCQLHLSSEKPQTKLLILHQAVAVILSL) folds into the bHLH domain. Lys-622 is covalently cross-linked (Glycyl lysine isopeptide (Lys-Gly) (interchain with G-Cter in SUMO2)).

In terms of assembly, homodimer. Heterodimer; efficient DNA binding requires dimerization with another bHLH protein. Forms a heterodimer with TWIST1 and TWIST2. Forms a heterodimer with NEUROD1; the heterodimer is inhibited in presence of ID2, but not NR0B2, to E-box element. Forms a heterodimer with TCF15; the heterodimer binds E-box element. Forms a heterodimer with MYOG; heterodimerization enhances MYOG DNA-binding and transcriptional activities. Forms a heterodimer with ATOH8; repress transcription of TCF3 and TCF3-NEUROG3 dimer-induced transactivation of E box-dependent promoters. Component of a nuclear TAL-1 complex composed at least of CBFA2T3, LDB1, TAL1 and TCF3. Interacts with NEUROD2. Interacts with EP300. Interacts with PTF1A, TGFB1I1 and UBE2I. Interacts with BHLHA9. Interacts with ASB2; the interaction is mediated by SKP2 and targets TCF3 for Notch-induced proteasomal degradation. Interacts with transcription factor ASCL5/AmeloD. As to quaternary structure, forms a heterodimer with ATOH7; required for ATOH7 DNA-binding. Interacts with RALGAPA1. Interacts with FIGLA. In terms of processing, phosphorylated following NGF stimulation. Undergoes Notch-induced ubiquitination and subsequent proteasomal degradation which is mediated by ASB1 or ASB2, the substrate-recognition components of probable ECS E3 ubiquitin-protein ligase complexes.

The protein resides in the nucleus. Transcriptional regulator involved in the initiation of neuronal differentiation and mesenchymal to epithelial transition. Heterodimers between TCF3 and tissue-specific basic helix-loop-helix (bHLH) proteins play major roles in determining tissue-specific cell fate during embryogenesis, like muscle or early B-cell differentiation. Together with TCF15, required for the mesenchymal to epithelial transition. Dimers bind DNA on E-box motifs: 5'-CANNTG-3'. Binds to the kappa-E2 site in the kappa immunoglobulin gene enhancer. Binds to IEB1 and IEB2, which are short DNA sequences in the insulin gene transcription control region. Functionally, facilitates ATOH7 binding to DNA at the consensus sequence 5'-CAGGTG-3', and positively regulates transcriptional activity. The chain is Transcription factor E2-alpha (Tcf3) from Mus musculus (Mouse).